The sequence spans 264 residues: MGNSGFYLNDTQNCVFADNIKLGQMESPLQDQQLILGTKSTPTAAKLNAKEGLKIDISNTNAQSATIDFSIDADTLSKLILDQIQKGLVDAIIKDITNSLIQEVIDRIISDKNLALTKAFKNFSLSEKIQCNGLFTKSNIGTLLGGTEIGKFTITPDNVNSMFLISADIIASRMEGNVVLALVREGDSSPCAISYGYSSGIPNVCSLRTAVNNTGTDPVTFSLRVGGMDSGVVWVNALANGDSILGTTATSNISFLEVKQQTNG.

This is Virulence plasmid protein pGP3-D from Chlamydia psittaci (Chlamydophila psittaci).